The primary structure comprises 385 residues: Glucans biosynthesis protein C (385 aa).

The next 10 helical transmembrane spans lie at 17 to 37 (AWLM…SHTW), 60 to 80 (MQVF…RYPL), 91 to 111 (VGIP…IMLQ), 137 to 157 (ISHL…VWIF), 173 to 193 (KFSM…YAVI), 212 to 232 (FIVM…LAFI), 239 to 259 (LFTT…VAYL), 274 to 294 (TESV…FSFG), 311 to 331 (ASLF…AYIT), and 338 to 358 (WLGF…LYEI).

The protein belongs to the acyltransferase 3 family. OpgC subfamily.

The protein localises to the cell membrane. It functions in the pathway glycan metabolism; osmoregulated periplasmic glucan (OPG) biosynthesis. Functionally, necessary for the succinyl substitution of periplasmic glucans. Could catalyze the transfer of succinyl residues from the cytoplasmic side of the membrane to the nascent glucan backbones on the periplasmic side of the membrane. This Escherichia coli O6:K15:H31 (strain 536 / UPEC) protein is Glucans biosynthesis protein C.